The chain runs to 32 residues: Phospholipase A2 (32 aa).

Ca(2+)-binding residues include Y16, G18, and G20.

Ca(2+) is required as a cofactor. Expressed by the venom gland.

The protein resides in the secreted. It catalyses the reaction a 1,2-diacyl-sn-glycero-3-phosphocholine + H2O = a 1-acyl-sn-glycero-3-phosphocholine + a fatty acid + H(+). In terms of biological role, PLA2 catalyzes the calcium-dependent hydrolysis of the 2-acyl groups in 3-sn-phosphoglycerides. In Micrurus lemniscatus (South American coral snake), this protein is Phospholipase A2.